A 153-amino-acid polypeptide reads, in one-letter code: MRCPFCHNQDTRVIDSRAAEEGTAIRRRRSCPACERRFTTQETVLLMVTKRSGATEPFSRSKIIAGVRRACQGRPVTEDALALLGQRVEEEIRSRGVAEVSSHEIGLTILGPLRDLDEVAYLRFASVYRSFESLEDFEREIAELRAERTATQG.

Residues 3 to 34 (CPFCHNQDTRVIDSRAAEEGTAIRRRRSCPAC) fold into a zinc finger. Positions 46 to 136 (LMVTKRSGAT…VYRSFESLED (91 aa)) constitute an ATP-cone domain.

Belongs to the NrdR family. Zn(2+) serves as cofactor.

Functionally, negatively regulates transcription of bacterial ribonucleotide reductase nrd genes and operons by binding to NrdR-boxes. The protein is Transcriptional repressor NrdR of Thermobifida fusca (strain YX).